The sequence spans 156 residues: V-type proton ATPase 16 kDa proteolipid subunit c (156 aa).

Topologically, residues 1–7 (MAENPIY) are lumenal. The helical transmembrane segment at 8-30 (GPFFGVMGAASAIIFSALGAAYG) threads the bilayer. The Cytoplasmic portion of the chain corresponds to 31–52 (TAKSGTGIAAMSVMRPELIMKS). The helical transmembrane segment at 53–73 (IIPVVMAGIIAIYGLVVAVLI) threads the bilayer. The Lumenal portion of the chain corresponds to 74–92 (AGSLDSPSNNYTLYRGFIH). Residues 93–114 (LGAGLAVGFSGLAAGFAIGIVG) traverse the membrane as a helical segment. Residues 115-126 (DAGVRGTAQQPR) lie on the Cytoplasmic side of the membrane. Residues 127–152 (LFVGMILILIFAEVLGLYGLIVAIYL) traverse the membrane as a helical segment. The Lumenal portion of the chain corresponds to 153-156 (YTKQ).

It belongs to the V-ATPase proteolipid subunit family. As to quaternary structure, V-ATPase is a heteromultimeric enzyme made up of two complexes: the ATP-hydrolytic V1 complex and the proton translocation V0 complex. The V1 complex consists of three catalytic AB heterodimers that form a heterohexamer, three peripheral stalks each consisting of EG heterodimers, one central rotor including subunits D and F, and the regulatory subunits C and H. The proton translocation complex V0 consists of the proton transport subunit a, a ring of proteolipid subunits c9c'', rotary subunit d, subunits e and f, and the accessory subunits VhaAC45 and ATP6AP2.

The protein resides in the membrane. Functionally, proton-conducting pore forming subunit of the V0 complex of vacuolar(H+)-ATPase (V-ATPase), a multisubunit enzyme composed of a peripheral complex (V1) that hydrolyzes ATP and a membrane integral complex (V0) that translocates protons. V-ATPase is responsible for acidifying and maintaining the pH of intracellular compartments and in some cell types, is targeted to the plasma membrane, where it is responsible for acidifying the extracellular environment. This chain is V-type proton ATPase 16 kDa proteolipid subunit c (VHA16), found in Manduca sexta (Tobacco hawkmoth).